A 1799-amino-acid polypeptide reads, in one-letter code: Putative neural-cadherin 2 (1799 aa).

Residues Asn-13, Asn-64, Asn-86, Asn-118, Asn-195, Asn-260, Asn-264, Asn-283, and Asn-377 are each glycosylated (N-linked (GlcNAc...) asparagine). 7 consecutive Cadherin domains span residues 37–136 (DRFL…PPVF), 137–252 (DRQT…APQF), 253–364 (PQGI…PPQF), 368–485 (EWVT…VPKF), 486–590 (DREH…APTF), 590–709 (FAQD…QPGS), and 708–812 (GSKS…AGSM). Asn-601, Asn-793, Asn-910, Asn-948, and Asn-969 each carry an N-linked (GlcNAc...) asparagine glycan. One can recognise an EGF-like 1 domain in the interval 973-1010 (QDHNCRTHLCYNGGRCVETRNGPKCVACPVGYNGPRCQ). Intrachain disulfides connect Cys-977–Cys-988, Cys-982–Cys-997, Cys-1000–Cys-1009, Cys-1191–Cys-1217, Cys-1224–Cys-1239, Cys-1233–Cys-1248, and Cys-1250–Cys-1259. The Laminin G-like 1 domain occupies 1011 to 1217 (QSTRSFRGNG…ALARNSFPAC (207 aa)). The 41-residue stretch at 1220–1260 (TDEVCLKTEHTARCWEHGNCVASLVQAKCHCQPGWMGPGCN) folds into the EGF-like 2 domain. One can recognise a Laminin G-like 2 domain in the interval 1263 to 1454 (TIPTTFKAQS…TMARNLERNC (192 aa)). Residues Asn-1376 and Asn-1437 are each glycosylated (N-linked (GlcNAc...) asparagine). Cystine bridges form between Cys-1419–Cys-1454, Cys-1501–Cys-1512, Cys-1506–Cys-1523, and Cys-1525–Cys-1534. Positions 1497–1535 (DRNECLDLPCLNGATCINLEPRLRYRCICPEGYWGENCE) constitute an EGF-like 3; calcium-binding domain. A helical transmembrane segment spans residues 1549–1569 (ALGAIFVCLIIILILALIFVL). Residues 1726 to 1799 (ASSQLPSDGG…PLPEVDKVVL (74 aa)) form a disordered region. Composition is skewed to gly residues over residues 1733–1744 (DGGGGSGDGPGP), 1752–1763 (LGGGGTGGGSGI), and 1775–1786 (SGAGPGGGGGSS).

It is found in the cell membrane. Functionally, cadherins are calcium-dependent cell adhesion proteins. They preferentially interact with themselves in a homophilic manner in connecting cells. This Drosophila melanogaster (Fruit fly) protein is Putative neural-cadherin 2 (CadN2).